The chain runs to 194 residues: A-type ATP synthase subunit E (194 aa).

This sequence belongs to the V-ATPase E subunit family. As to quaternary structure, has multiple subunits with at least A(3), B(3), C, D, E, F, H, I and proteolipid K(x).

It is found in the cell membrane. Its function is as follows. Component of the A-type ATP synthase that produces ATP from ADP in the presence of a proton gradient across the membrane. This chain is A-type ATP synthase subunit E, found in Haloferax volcanii (strain ATCC 29605 / DSM 3757 / JCM 8879 / NBRC 14742 / NCIMB 2012 / VKM B-1768 / DS2) (Halobacterium volcanii).